Here is a 117-residue protein sequence, read N- to C-terminus: Large ribosomal subunit protein bL20c (117 aa).

The protein belongs to the bacterial ribosomal protein bL20 family.

Its subcellular location is the plastid. The protein resides in the chloroplast. In terms of biological role, binds directly to 23S ribosomal RNA and is necessary for the in vitro assembly process of the 50S ribosomal subunit. It is not involved in the protein synthesizing functions of that subunit. The chain is Large ribosomal subunit protein bL20c from Ceratophyllum demersum (Rigid hornwort).